We begin with the raw amino-acid sequence, 340 residues long: Ferredoxin--NADP reductase (340 aa).

Thr20, Asp39, Gln47, Tyr52, Val92, Phe126, Asp293, and Thr334 together coordinate FAD.

This sequence belongs to the ferredoxin--NADP reductase type 2 family. Homodimer. Requires FAD as cofactor.

The catalysed reaction is 2 reduced [2Fe-2S]-[ferredoxin] + NADP(+) + H(+) = 2 oxidized [2Fe-2S]-[ferredoxin] + NADPH. The polypeptide is Ferredoxin--NADP reductase (Gluconobacter oxydans (strain 621H) (Gluconobacter suboxydans)).